The chain runs to 435 residues: Cytochrome c biogenesis protein CcsB (435 aa).

Helical transmembrane passes span 11–31 (LRVA…GTAL), 69–89 (SDWF…CSWR), and 159–179 (VGPL…VWGV).

The protein belongs to the Ccs1/CcsB family. In terms of assembly, may interact with CcsA.

The protein localises to the plastid. Its subcellular location is the organellar chromatophore thylakoid membrane. Its function is as follows. Required during biogenesis of c-type cytochromes (cytochrome c6 and cytochrome f) at the step of heme attachment. This is Cytochrome c biogenesis protein CcsB from Paulinella chromatophora.